We begin with the raw amino-acid sequence, 487 residues long: Transmembrane protein 161B (487 aa).

Asn-34 carries an N-linked (GlcNAc...) asparagine glycan. The helical transmembrane segment at 107-127 (LVDFTVAATVVYLVTEVYYNF) threads the bilayer. Asn-135 is a glycosylation site (N-linked (GlcNAc...) asparagine). 2 helical membrane passes run 136 to 156 (ISLV…FSLT) and 169 to 189 (SVCV…LIVT). An N-linked (GlcNAc...) asparagine glycan is attached at Asn-203. A run of 5 helical transmembrane segments spans residues 228–248 (FKFF…FPGL), 265–285 (ITQT…LLWV), 305–325 (LMTE…LCAL), 367–387 (VFYY…MLLH), and 459–479 (LSFL…FGLF).

This sequence belongs to the TMEM161 family.

The protein localises to the cell membrane. Functionally, essential for maintaining normal cardiac rhythm in the developing heart and for neonatal survival. Inhibits potassium and calcium currents in the cardiomyocytes, this assists in timely action potential repolarization and thereby maintains normal cardiac rhythm. In Homo sapiens (Human), this protein is Transmembrane protein 161B (TMEM161B).